We begin with the raw amino-acid sequence, 409 residues long: Serine/threonine transporter SstT (409 aa).

A run of 9 helical transmembrane segments spans residues G14–A34, G57–I77, I89–F109, A149–L169, I190–V210, L224–V244, I296–L316, I338–I358, and F365–V385.

The protein belongs to the dicarboxylate/amino acid:cation symporter (DAACS) (TC 2.A.23) family.

The protein localises to the cell inner membrane. It carries out the reaction L-serine(in) + Na(+)(in) = L-serine(out) + Na(+)(out). The catalysed reaction is L-threonine(in) + Na(+)(in) = L-threonine(out) + Na(+)(out). Involved in the import of serine and threonine into the cell, with the concomitant import of sodium (symport system). The protein is Serine/threonine transporter SstT of Campylobacter fetus subsp. fetus (strain 82-40).